Reading from the N-terminus, the 788-residue chain is Spastin (788 aa).

Residues 1 to 105 (MVRTKNQSSS…PRSAGGPSSV (105 aa)) form a disordered region. Topologically, residues 1 to 116 (MVRTKNQSSS…KQNLYVVSFP (116 aa)) are cytoplasmic. Positions 1 to 227 (MVRTKNQSSS…NRSGSGYSPG (227 aa)) are required for localization to punctate cytoplasmic foci. Low complexity-rich tracts occupy residues 8–48 (SSSS…SSHR) and 57–75 (ATNV…SSPD). The helical intramembrane region spans 117 to 137 (IIFLFNVLRSLIYQLFCIFRY). Topologically, residues 138-788 (LYGASTKVIY…WSSDYGDITI (651 aa)) are cytoplasmic. A sufficient for interaction with microtubules and microtubule severing region spans residues 227-788 (GPGDPLLAKQ…WSSDYGDITI (562 aa)). The 76-residue stretch at 240-315 (HRRAFEYISK…SMARDRLHFL (76 aa)) folds into the MIT domain. The span at 331 to 353 (EKQKANESREQQQKPQKAREAAD) shows a compositional bias: basic and acidic residues. The disordered stretch occupies residues 331–484 (EKQKANESRE…SGSGSGASTP (154 aa)). A compositionally biased stretch (low complexity) spans 387–400 (ATATTPTSSSSLAS). Composition is skewed to polar residues over residues 419-433 (NKSQ…SKTS) and 453-469 (QFSS…RTPI). Residues 471–485 (NNGASGSGSGASTPV) form a required for interaction with microtubules region. 553–560 (GPPGNGKT) serves as a coordination point for ATP.

It belongs to the AAA ATPase family. Spastin subfamily. In terms of assembly, homohexamer. The homohexamer is stabilized by ATP-binding. The homohexamer may adopt a ring conformation through which microtubules pass prior to being severed. Interacts with microtubules. Interacts with atl; may be involved in microtubule dynamics.

The protein resides in the membrane. It is found in the cytoplasm. The protein localises to the cytoskeleton. It localises to the microtubule organizing center. Its subcellular location is the centrosome. The protein resides in the chromosome. It is found in the lipid droplet. The enzyme catalyses n ATP + n H2O + a microtubule = n ADP + n phosphate + (n+1) alpha/beta tubulin heterodimers.. ATP-dependent microtubule severing protein. Stimulates microtubule minus-end depolymerization and poleward microtubule flux in the mitotic spindle. Regulates microtubule stability in the neuromuscular junction synapse. Involved in lipid metabolism by regulating the size and distribution of lipid droplets. Involved in axon regeneration by regulating microtubule severing. The polypeptide is Spastin (Drosophila persimilis (Fruit fly)).